We begin with the raw amino-acid sequence, 107 residues long: Large ribosomal subunit protein P1 (107 aa).

A compositionally biased stretch (low complexity) spans 67-82 (GPASAAPAGAAGAAAP). Residues 67-107 (GPASAAPAGAAGAAAPAEEKAEEKEEEKEESDEDMGFGLFD) form a disordered region. The span at 90–101 (KEEEKEESDEDM) shows a compositional bias: acidic residues.

The protein belongs to the eukaryotic ribosomal protein P1/P2 family. P1 and P2 exist as dimers at the large ribosomal subunit.

The protein localises to the cytoplasm. Plays an important role in the elongation step of protein synthesis. This Penicillium crustosum (Blue mold fungus) protein is Large ribosomal subunit protein P1.